Reading from the N-terminus, the 366-residue chain is Quinolinate synthase (366 aa).

The iminosuccinate site is built by His44 and Ser61. Residue Cys108 participates in [4Fe-4S] cluster binding. Residues 139-141 and Ser160 contribute to the iminosuccinate site; that span reads YIN. Cys228 serves as a coordination point for [4Fe-4S] cluster. Iminosuccinate is bound by residues 254–256 and Thr271; that span reads HPE. Position 318 (Cys318) interacts with [4Fe-4S] cluster.

It belongs to the quinolinate synthase family. Type 3 subfamily. It depends on [4Fe-4S] cluster as a cofactor.

Its subcellular location is the cytoplasm. The enzyme catalyses iminosuccinate + dihydroxyacetone phosphate = quinolinate + phosphate + 2 H2O + H(+). It functions in the pathway cofactor biosynthesis; NAD(+) biosynthesis; quinolinate from iminoaspartate: step 1/1. In terms of biological role, catalyzes the condensation of iminoaspartate with dihydroxyacetone phosphate to form quinolinate. The protein is Quinolinate synthase of Listeria monocytogenes serotype 4b (strain F2365).